Here is a 659-residue protein sequence, read N- to C-terminus: Tyrosine-protein kinase BTK (659 aa).

Residue Ala2 is modified to N-acetylalanine. One can recognise a PH domain in the interval 3–133 (AVILESIFLK…WIHQLKNVIR (131 aa)). The tract at residues 12-24 (KRSQQKKKTSPLN) is inositol-(1,3,4,5)-tetrakisphosphate 1-binding. Position 21 is a phosphoserine (Ser21). Residues Lys26, Arg28, and Tyr39 each contribute to the 1D-myo-inositol 1,3,4,5-tetrakisphosphate site. Tyr40 is subject to Phosphotyrosine. Lys53 is a binding site for 1D-myo-inositol 1,3,4,5-tetrakisphosphate. Ser55 and Ser115 each carry phosphoserine. The segment at 135-171 (NSDLVQKYHPCFWIDGQYLCCSQTAKNAMGCQILENR) adopts a Btk-type zinc-finger fold. Zn(2+)-binding residues include His143, Cys154, Cys155, and Cys165. A disordered region spans residues 171-210 (RNGSLKPGSSHRKTKKPLPPTPEEDQILKKPLPPEPAAAP). At Ser180 the chain carries Phosphoserine; by PKC/PRKCB. Position 191 is a phosphothreonine (Thr191). Residues 214–274 (SELKKVVALY…PSNYVTEAED (61 aa)) enclose the SH3 domain. Tyr223 carries the post-translational modification Phosphotyrosine; by autocatalysis. The SH2 domain occupies 281–377 (WYSKHMTRSQ…GLISRLKYPV (97 aa)). Residues Tyr344 and Tyr361 each carry the phosphotyrosine modification. The 254-residue stretch at 402–655 (LTFLKELGTG…ILLSNILDVM (254 aa)) folds into the Protein kinase domain. ATP contacts are provided by residues 408–416 (LGTGQFGVV) and Lys430. Position 474-477 (474-477 (TEYM)) interacts with clofedanol. 474–477 (TEYM) serves as a coordination point for dasatinib. Asp521 serves as the catalytic Proton acceptor. Leu542 is a clofedanol binding site. At Tyr551 the chain carries Phosphotyrosine; by LYN and SYK. A CAV1-binding motif is present at residues 581–588 (WAFGVLMW). Phosphoserine is present on Ser604. The residue at position 617 (Tyr617) is a Phosphotyrosine. Phosphoserine is present on residues Ser623 and Ser659.

This sequence belongs to the protein kinase superfamily. Tyr protein kinase family. TEC subfamily. In terms of assembly, part of a complex composed of EEIG1, TNFRSF11A/RANK, PLCG2, GAB2, TEC and BTK; complex formation increases in the presence of TNFSF11/RANKL. Binds GTF2I through the PH domain. Interacts with SH3BP5 via the SH3 domain. Interacts with IBTK via its PH domain. Interacts with ARID3A, CAV1, FASLG, PIN1, TLR8 and TLR9. Interacts with MPL/TPOR. It depends on Zn(2+) as a cofactor. Following B-cell receptor (BCR) engagement, translocates to the plasma membrane where it gets phosphorylated at Tyr-551 by LYN and SYK. Phosphorylation at Tyr-551 is followed by autophosphorylation of Tyr-223 which may create a docking site for a SH2 containing protein. Phosphorylation at Ser-180 by PRKCB, leads in translocation of BTK back to the cytoplasmic fraction. Phosphorylation at Ser-21 and Ser-115 creates a binding site for PIN1 at these Ser-Pro motifs, and promotes it's recruitment. As to expression, predominantly expressed in B-lymphocytes.

It localises to the cytoplasm. The protein resides in the cell membrane. The protein localises to the nucleus. It is found in the membrane raft. It carries out the reaction L-tyrosyl-[protein] + ATP = O-phospho-L-tyrosyl-[protein] + ADP + H(+). Its activity is regulated as follows. Activated by phosphorylation. In primary B lymphocytes, is almost always non-phosphorylated and is thus catalytically inactive. Stimulation of TLR8 and TLR9 causes BTK activation. As a negative feedback mechanism to fine-tune BCR signaling, activated PRKCB down-modulates BTK function via direct phosphorylation of BTK at Ser-180, resulting in translocation of BTK back to the cytoplasmic fraction. PIN1, SH3BP5, and IBTK were also identified as BTK activity inhibitors. Interaction with CAV1 leads to dramatic down-regulation of the kinase activity of BTK. LFM-13A is a specific inhibitor of BTK. Dasatinib, a cancer drug acting as a tyrosine kinase inhibitor, also blocks BTK activity. Non-receptor tyrosine kinase indispensable for B lymphocyte development, differentiation and signaling. Binding of antigen to the B-cell antigen receptor (BCR) triggers signaling that ultimately leads to B-cell activation. After BCR engagement and activation at the plasma membrane, phosphorylates PLCG2 at several sites, igniting the downstream signaling pathway through calcium mobilization, followed by activation of the protein kinase C (PKC) family members. PLCG2 phosphorylation is performed in close cooperation with the adapter protein B-cell linker protein BLNK. BTK acts as a platform to bring together a diverse array of signaling proteins and is implicated in cytokine receptor signaling pathways. Plays an important role in the function of immune cells of innate as well as adaptive immunity, as a component of the Toll-like receptors (TLR) pathway. The TLR pathway acts as a primary surveillance system for the detection of pathogens and are crucial to the activation of host defense. Especially, is a critical molecule in regulating TLR9 activation in splenic B-cells. Within the TLR pathway, induces tyrosine phosphorylation of TIRAP which leads to TIRAP degradation. BTK also plays a critical role in transcription regulation. Induces the activity of NF-kappa-B, which is involved in regulating the expression of hundreds of genes. BTK is involved on the signaling pathway linking TLR8 and TLR9 to NF-kappa-B. Acts as an activator of NLRP3 inflammasome assembly by mediating phosphorylation of NLRP3. Transiently phosphorylates transcription factor GTF2I on tyrosine residues in response to BCR. GTF2I then translocates to the nucleus to bind regulatory enhancer elements to modulate gene expression. ARID3A and NFAT are other transcriptional target of BTK. BTK is required for the formation of functional ARID3A DNA-binding complexes. There is however no evidence that BTK itself binds directly to DNA. BTK has a dual role in the regulation of apoptosis. Plays a role in STING1-mediated induction of type I interferon (IFN) response by phosphorylating DDX41. In Homo sapiens (Human), this protein is Tyrosine-protein kinase BTK (BTK).